Reading from the N-terminus, the 217-residue chain is Small ribosomal subunit protein uS3 (217 aa).

In terms of domain architecture, KH type-2 spans 40-110 (IRDLINKWFN…EVYINIHEVR (71 aa)).

This sequence belongs to the universal ribosomal protein uS3 family. Part of the 30S ribosomal subunit. Forms a tight complex with proteins S10 and S14.

In terms of biological role, binds the lower part of the 30S subunit head. Binds mRNA in the 70S ribosome, positioning it for translation. The polypeptide is Small ribosomal subunit protein uS3 (Rickettsia typhi (strain ATCC VR-144 / Wilmington)).